The primary structure comprises 1342 residues: DNA-directed RNA polymerase subunit beta (1342 aa).

This sequence belongs to the RNA polymerase beta chain family. The RNAP catalytic core consists of 2 alpha, 1 beta, 1 beta' and 1 omega subunit. When a sigma factor is associated with the core the holoenzyme is formed, which can initiate transcription.

It carries out the reaction RNA(n) + a ribonucleoside 5'-triphosphate = RNA(n+1) + diphosphate. DNA-dependent RNA polymerase catalyzes the transcription of DNA into RNA using the four ribonucleoside triphosphates as substrates. This is DNA-directed RNA polymerase subunit beta from Pectobacterium carotovorum subsp. carotovorum (strain PC1).